A 318-amino-acid polypeptide reads, in one-letter code: Deoxyhypusine hydroxylase (318 aa).

Fe cation-binding residues include H65, E66, H98, and E99. HEAT-like PBS-type repeat units follow at residues 96–122 (VRHEAAEALGALGFTESLPVLEKYYKE), 194–220 (YRYRVMFRLRNIGNEEAVLALTDGFKD), 225–251 (FRHEIAFVFGQMIAPASVPALIKVLEN), and 258–284 (VRHEAAEALGGIANDECLPVLKKFSKD). H227, E228, H260, and E261 together coordinate Fe cation.

The protein belongs to the deoxyhypusine hydroxylase family. It depends on Fe(2+) as a cofactor.

It localises to the cytoplasm. The protein localises to the nucleus. The catalysed reaction is [eIF5A protein]-deoxyhypusine + AH2 + O2 = [eIF5A protein]-hypusine + A + H2O. Its pathway is protein modification; eIF5A hypusination. Its function is as follows. Catalyzes the hydroxylation of the N(6)-(4-aminobutyl)-L-lysine intermediate to form hypusine, an essential post-translational modification only found in mature eIF-5A factor. This chain is Deoxyhypusine hydroxylase (lia1), found in Schizosaccharomyces pombe (strain 972 / ATCC 24843) (Fission yeast).